The sequence spans 185 residues: PXMP2/4 family protein 4 (185 aa).

A run of 3 helical transmembrane segments spans residues 63–83, 100–120, and 141–161; these read MAVF…KYLD, IDQV…MGIL, and VSDC…ISSI.

Belongs to the peroxisomal membrane protein PXMP2/4 family.

It is found in the membrane. In Dictyostelium discoideum (Social amoeba), this protein is PXMP2/4 family protein 4.